The chain runs to 404 residues: Immediate early response gene 5-like protein (404 aa).

3 disordered regions span residues 86 to 107, 160 to 231, and 308 to 327; these read AADF…EPAA, AALQ…APAS, and QEEE…EPPG. Positions 177–194 are enriched in pro residues; sequence PLQPGPAPLPLPLPPPAP. Residues 195-231 show a composition bias toward low complexity; that stretch reads AALCPRDPRAPAACSAPPGAAPPAAAASPPASPAPAS. The segment covering 308–318 has biased composition (acidic residues); it reads QEEEEDDEEDA.

This sequence belongs to the IER family.

This chain is Immediate early response gene 5-like protein (IER5L), found in Homo sapiens (Human).